The primary structure comprises 172 residues: Shikimate kinase (172 aa).

11–16 is a binding site for ATP; that stretch reads GAGKST. A Mg(2+)-binding site is contributed by Ser-15. Substrate contacts are provided by Asp-33, Arg-57, and Gly-79. Arg-117 is an ATP binding site. Arg-136 is a binding site for substrate. Arg-153 contributes to the ATP binding site.

Belongs to the shikimate kinase family. In terms of assembly, monomer. Requires Mg(2+) as cofactor.

Its subcellular location is the cytoplasm. The catalysed reaction is shikimate + ATP = 3-phosphoshikimate + ADP + H(+). The protein operates within metabolic intermediate biosynthesis; chorismate biosynthesis; chorismate from D-erythrose 4-phosphate and phosphoenolpyruvate: step 5/7. Its function is as follows. Catalyzes the specific phosphorylation of the 3-hydroxyl group of shikimic acid using ATP as a cosubstrate. This chain is Shikimate kinase, found in Pseudomonas fluorescens (strain Pf0-1).